The chain runs to 70 residues: Large ribosomal subunit protein bL31 (70 aa).

Zn(2+) is bound by residues C16, C18, C37, and C40.

It belongs to the bacterial ribosomal protein bL31 family. Type A subfamily. In terms of assembly, part of the 50S ribosomal subunit. Zn(2+) serves as cofactor.

Functionally, binds the 23S rRNA. This chain is Large ribosomal subunit protein bL31, found in Shewanella sediminis (strain HAW-EB3).